We begin with the raw amino-acid sequence, 727 residues long: Putative ATP-dependent RNA helicase DHX15 (727 aa).

Residues 1–41 (MSKRKHESSDSNKKAMKKQQNKIEEEEEEITNTTTTTTTTN) are disordered. Residues 31–41 (TNTTTTTTTTN) show a composition bias toward low complexity. Residues 87 to 251 (IKVIKENQVV…FENAPLIKVP (165 aa)) form the Helicase ATP-binding domain. Residue 100–107 (GETGSGKT) participates in ATP binding. The DEAH box signature appears at 198-201 (DEAH). One can recognise a Helicase C-terminal domain in the interval 273–445 (AVRTVIDIHT…SVVLQLLKLG (173 aa)).

Belongs to the DEAD box helicase family. DEAH subfamily. DDX15/PRP43 sub-subfamily.

It localises to the nucleus. It catalyses the reaction ATP + H2O = ADP + phosphate + H(+). In terms of biological role, pre-mRNA processing factor involved in disassembly of spliceosomes after the release of mature mRNA. The sequence is that of Putative ATP-dependent RNA helicase DHX15 (dhx15) from Dictyostelium discoideum (Social amoeba).